Consider the following 399-residue polypeptide: All trans-polyprenyl-diphosphate synthase PDSS2 (399 aa).

This sequence belongs to the FPP/GGPP synthase family. In terms of assembly, heterotetramer composed of 2 PDSS1/DPS1 and 2 PDSS2/DLP1 subunits.

It is found in the mitochondrion. The enzyme catalyses 7 isopentenyl diphosphate + (2E,6E)-farnesyl diphosphate = all-trans-decaprenyl diphosphate + 7 diphosphate. The catalysed reaction is 6 isopentenyl diphosphate + (2E,6E)-farnesyl diphosphate = all-trans-nonaprenyl diphosphate + 6 diphosphate. The protein operates within cofactor biosynthesis; ubiquinone biosynthesis. Its function is as follows. Heterotetrameric enzyme that catalyzes the condensation of farnesyl diphosphate (FPP), which acts as a primer, and isopentenyl diphosphate (IPP) to produce prenyl diphosphates of varying chain lengths and participates in the determination of the side chain of ubiquinone. Supplies nona and decaprenyl diphosphate, the precursors for the side chain of the isoprenoid quinones ubiquinone-9 (Q9) and ubiquinone-10 (Q10) respectively. The enzyme adds isopentenyl diphosphate molecules sequentially to farnesyl diphosphate with trans stereochemistry. May play a role during cerebellar development. May regulate mitochondrial respiratory chain function. This Homo sapiens (Human) protein is All trans-polyprenyl-diphosphate synthase PDSS2.